Reading from the N-terminus, the 96-residue chain is Putative septation protein SpoVG (96 aa).

Belongs to the SpoVG family.

Could be involved in septation. The protein is Putative septation protein SpoVG of Geobacillus sp. (strain WCH70).